The following is a 129-amino-acid chain: Small ribosomal subunit protein uS11 (129 aa).

This sequence belongs to the universal ribosomal protein uS11 family. Part of the 30S ribosomal subunit. Interacts with proteins S7 and S18. Binds to IF-3.

Its function is as follows. Located on the platform of the 30S subunit, it bridges several disparate RNA helices of the 16S rRNA. Forms part of the Shine-Dalgarno cleft in the 70S ribosome. In Vibrio campbellii (strain ATCC BAA-1116), this protein is Small ribosomal subunit protein uS11.